The following is a 151-amino-acid chain: Flagellar assembly factor FliW (151 aa).

It belongs to the FliW family. Interacts with translational regulator CsrA and flagellin(s).

The protein localises to the cytoplasm. In terms of biological role, acts as an anti-CsrA protein, binds CsrA and prevents it from repressing translation of its target genes, one of which is flagellin. Binds to flagellin and participates in the assembly of the flagellum. The chain is Flagellar assembly factor FliW from Halalkalibacterium halodurans (strain ATCC BAA-125 / DSM 18197 / FERM 7344 / JCM 9153 / C-125) (Bacillus halodurans).